The chain runs to 432 residues: Glutamate-1-semialdehyde 2,1-aminomutase (432 aa).

Position 272 is an N6-(pyridoxal phosphate)lysine (Lys-272).

The protein belongs to the class-III pyridoxal-phosphate-dependent aminotransferase family. HemL subfamily. As to quaternary structure, homodimer. Requires pyridoxal 5'-phosphate as cofactor.

The protein localises to the cytoplasm. It carries out the reaction (S)-4-amino-5-oxopentanoate = 5-aminolevulinate. Its pathway is porphyrin-containing compound metabolism; protoporphyrin-IX biosynthesis; 5-aminolevulinate from L-glutamyl-tRNA(Glu): step 2/2. The protein operates within porphyrin-containing compound metabolism; chlorophyll biosynthesis. This chain is Glutamate-1-semialdehyde 2,1-aminomutase, found in Nostoc sp. (strain PCC 7120 / SAG 25.82 / UTEX 2576).